A 245-amino-acid polypeptide reads, in one-letter code: Acyl-protein thioesterase 1 (245 aa).

Catalysis depends on charge relay system residues Ser-126, Asp-182, and His-214.

It belongs to the AB hydrolase superfamily. AB hydrolase 2 family.

The protein localises to the cytoplasm. It is found in the nucleus. It carries out the reaction S-hexadecanoyl-L-cysteinyl-[protein] + H2O = L-cysteinyl-[protein] + hexadecanoate + H(+). Its function is as follows. Hydrolyzes fatty acids from S-acylated cysteine residues in proteins with a strong preference for palmitoylated G-alpha proteins over other acyl substrates. Mediates the deacylation of G-alpha proteins such as GPA1 in vivo, but has weak or no activity toward palmitoylated Ras proteins. Has weak lysophospholipase activity in vitro; however such activity may not exist in vivo. In Neurospora crassa (strain ATCC 24698 / 74-OR23-1A / CBS 708.71 / DSM 1257 / FGSC 987), this protein is Acyl-protein thioesterase 1.